The primary structure comprises 305 residues: Porphobilinogen deaminase (305 aa).

Position 241 is an S-(dipyrrolylmethanemethyl)cysteine (Cys-241).

Belongs to the HMBS family. As to quaternary structure, monomer. Dipyrromethane is required as a cofactor.

It carries out the reaction 4 porphobilinogen + H2O = hydroxymethylbilane + 4 NH4(+). It functions in the pathway porphyrin-containing compound metabolism; protoporphyrin-IX biosynthesis; coproporphyrinogen-III from 5-aminolevulinate: step 2/4. In terms of biological role, tetrapolymerization of the monopyrrole PBG into the hydroxymethylbilane pre-uroporphyrinogen in several discrete steps. In Exiguobacterium sp. (strain ATCC BAA-1283 / AT1b), this protein is Porphobilinogen deaminase.